A 419-amino-acid polypeptide reads, in one-letter code: GTPase Obg (419 aa).

In terms of domain architecture, Obg spans 2 to 159 (SAFVDAVTVE…FLAKVELQVL (158 aa)). The 166-residue stretch at 160–325 (ADVGLLGYPN…LKYEIATTLK (166 aa)) folds into the OBG-type G domain. GTP-binding positions include 166–173 (GYPNVGKS), 191–195 (FTTLS), 212–215 (DLPG), 279–282 (NKMD), and 306–308 (SAL). Residues serine 173 and threonine 193 each coordinate Mg(2+). The OCT domain occupies 341 to 419 (LNAEDAVDFI…IFSYEFEYLE (79 aa)).

Belongs to the TRAFAC class OBG-HflX-like GTPase superfamily. OBG GTPase family. As to quaternary structure, monomer. Mg(2+) serves as cofactor.

It is found in the cytoplasm. An essential GTPase which binds GTP, GDP and possibly (p)ppGpp with moderate affinity, with high nucleotide exchange rates and a fairly low GTP hydrolysis rate. Plays a role in control of the cell cycle, stress response, ribosome biogenesis and in those bacteria that undergo differentiation, in morphogenesis control. This is GTPase Obg from Acholeplasma laidlawii (strain PG-8A).